Reading from the N-terminus, the 484-residue chain is Glycogen synthase (484 aa).

An ADP-alpha-D-glucose-binding site is contributed by Lys-15.

Belongs to the glycosyltransferase 1 family. Bacterial/plant glycogen synthase subfamily.

The enzyme catalyses [(1-&gt;4)-alpha-D-glucosyl](n) + ADP-alpha-D-glucose = [(1-&gt;4)-alpha-D-glucosyl](n+1) + ADP + H(+). Its pathway is glycan biosynthesis; glycogen biosynthesis. Its function is as follows. Synthesizes alpha-1,4-glucan chains using ADP-glucose. The protein is Glycogen synthase (glgA) of Bacillus subtilis (strain 168).